We begin with the raw amino-acid sequence, 947 residues long: MIGALARRLFGSPNDRRIKGYQPRVAAINALEPEVAALSDEALRARTVDFRAQIAAGATLDDILVPAFATVREAAKRTLGQRHFDVQLIGGMVLHEGDIAEMKTGEGKTLVATLAVYLNALAGKGVHVVTVNDYLAKRDSAWMGEIYTFLGMTTGVIVHGLSDAERKAAYGCDITYGTNNEYGFDYLRDNMKYTLEEMVQRGHAYAIVDEVDSILIDEARTPLIISGPLDDRSEFYNTIDTFLPKLDKATDFEVDEKQRTVTLTEVGMETIEVLLRDAGQLKGESLYDIENVSVVHHINQALRAHSLFQRDKDYIVRNDEVIIIDEFTGRMMPGRRYSEGLHQALEAKEHVTVQPENQTLASITFQNYFRMYDKLAGMTGTALTEADELFDIYKLEVVEIPTNVPIARLDEDDEVYRTQNEKYAAILAEVERANSRLQPVLVGTASIEKSEVLADYLKNNGYKQIDFADPKGMEKLYAAARAGKPAKLFAVLNARFHEQEAYIVAEAGVPGAITIATNMAGRGTDIKLGGSLEMRIEHETVDITDEAEKAAKIELIKADVERFRELVLRAEETIEIEPAKGAKPAKTLTRPGGLYIIGSERHESRRIDNQLRGRSGRQGDPGRSKFFLSLEDDLMRIFGSDRLDTMLTKLGLKEGEAIIHPWINKALEKAQQKVEARNFDIRKNLLKFDNVSNDQRKVIFDQRIDLMQDESVAETVSDMRHIFVEDLVAKHVPEHAYAEQWDVAGLKEELNRVLGLDLPVEEWAKEEGIAEEELLSRIENRADEHMAAKVAQWGPEMMRYAEKSILLQTLDHLWREHLVMLDHLRNVIGLRGYGQRDPLQEYKSEAFNLFEALIAHLREAVTAQLMRVEIVTQEPQPELPPMAAHKFDPQTGEDELAFASVALAPADDADKAARDPNRPETWGKVGRNEDCPCNSGKKYKHCHGRYA.

Residues glutamine 87, glycine 105–threonine 109, and aspartate 525 contribute to the ATP site. A disordered region spans residues aspartate 907 to lysine 937. Residues aspartate 908–arginine 918 show a composition bias toward basic and acidic residues. Residues cysteine 931, cysteine 933, cysteine 942, and histidine 943 each contribute to the Zn(2+) site.

It belongs to the SecA family. Monomer and homodimer. Part of the essential Sec protein translocation apparatus which comprises SecA, SecYEG and auxiliary proteins SecDF-YajC and YidC. Zn(2+) serves as cofactor.

It localises to the cell inner membrane. The protein localises to the cytoplasm. It catalyses the reaction ATP + H2O + cellular proteinSide 1 = ADP + phosphate + cellular proteinSide 2.. Functionally, part of the Sec protein translocase complex. Interacts with the SecYEG preprotein conducting channel. Has a central role in coupling the hydrolysis of ATP to the transfer of proteins into and across the cell membrane, serving both as a receptor for the preprotein-SecB complex and as an ATP-driven molecular motor driving the stepwise translocation of polypeptide chains across the membrane. The chain is Protein translocase subunit SecA 1 from Rhodopseudomonas palustris (strain BisA53).